We begin with the raw amino-acid sequence, 177 residues long: VQ motif-containing protein 11 (177 aa).

The short motif at 25–34 (FRNIVQKLTG) is the VQ element. Phosphoserine is present on residues S43, S99, S115, S142, and S145. The segment covering 115 to 133 (SAREEHHAQPDKEEQKAIA) has biased composition (basic and acidic residues). The interval 115–177 (SAREEHHAQP…RIHEDNHRDS (63 aa)) is disordered. Residues 148 to 159 (EPAPELLPLFPL) are compositionally biased toward low complexity. Position 161 is a phosphoserine (S161). The span at 168-177 (RIHEDNHRDS) shows a compositional bias: basic and acidic residues.

Post-translationally, phosphorylated on serine residues by MPK6.

It localises to the nucleus. Functionally, may modulate WRKY transcription factor activities. The sequence is that of VQ motif-containing protein 11 from Arabidopsis thaliana (Mouse-ear cress).